The sequence spans 179 residues: MLAALYYVLKGDPYKALKEDLESLKKAKLLTEDLRITEKGMELIQQLISKPISLKGKVVSGDGEGRYYLSLEGYRRQVREKLGFDPFPGTLNVLLDPTSTEKKSTLMFKRPIILKGFTENGKRYGEVLAFPARVSGVEAALVIPLKTHHPPEIIELISPVELRKALKLKDGDEVEVLVY.

61–66 (GDGEGR) contacts CDP. Mg(2+) contacts are provided by threonine 90 and asparagine 92. The FMN site is built by threonine 147 and glutamate 155. Residue 160 to 163 (VELR) coordinates CDP.

The protein belongs to the archaeal riboflavin kinase family. Mg(2+) serves as cofactor.

The enzyme catalyses riboflavin + CTP = CDP + FMN + H(+). The protein operates within cofactor biosynthesis; FMN biosynthesis; FMN from riboflavin (CTP route): step 1/1. Catalyzes the CTP-dependent phosphorylation of riboflavin (vitamin B2) to form flavin mononucleotide (FMN). This is Riboflavin kinase from Ignicoccus hospitalis (strain KIN4/I / DSM 18386 / JCM 14125).